We begin with the raw amino-acid sequence, 119 residues long: Small ribosomal subunit protein bS16 (119 aa).

Residues 81–119 (GLAKRPARNNPKKAEPGQKAKERAAARAEKAGAGDDAAA) are disordered. Positions 92-113 (KKAEPGQKAKERAAARAEKAGA) are enriched in basic and acidic residues.

This sequence belongs to the bacterial ribosomal protein bS16 family.

The polypeptide is Small ribosomal subunit protein bS16 (Methylobacterium sp. (strain 4-46)).